The sequence spans 114 residues: Large ribosomal subunit protein bL19 (114 aa).

This sequence belongs to the bacterial ribosomal protein bL19 family.

Functionally, this protein is located at the 30S-50S ribosomal subunit interface and may play a role in the structure and function of the aminoacyl-tRNA binding site. The polypeptide is Large ribosomal subunit protein bL19 (Lactococcus lactis subsp. cremoris (strain MG1363)).